Here is a 333-residue protein sequence, read N- to C-terminus: Anthranilate phosphoribosyltransferase (333 aa).

5-phospho-alpha-D-ribose 1-diphosphate-binding positions include glycine 81, 84–85 (GD), threonine 89, 91–94 (NIST), 109–117 (KHGNRSVSS), and alanine 121. Glycine 81 lines the anthranilate pocket. Serine 93 is a binding site for Mg(2+). An anthranilate-binding site is contributed by asparagine 112. Arginine 167 is a binding site for anthranilate. 2 residues coordinate Mg(2+): aspartate 225 and glutamate 226.

The protein belongs to the anthranilate phosphoribosyltransferase family. In terms of assembly, homodimer. The cofactor is Mg(2+).

It carries out the reaction N-(5-phospho-beta-D-ribosyl)anthranilate + diphosphate = 5-phospho-alpha-D-ribose 1-diphosphate + anthranilate. It participates in amino-acid biosynthesis; L-tryptophan biosynthesis; L-tryptophan from chorismate: step 2/5. In terms of biological role, catalyzes the transfer of the phosphoribosyl group of 5-phosphorylribose-1-pyrophosphate (PRPP) to anthranilate to yield N-(5'-phosphoribosyl)-anthranilate (PRA). This is Anthranilate phosphoribosyltransferase from Haemophilus influenzae (strain 86-028NP).